Consider the following 511-residue polypeptide: Cytochrome P450 monooxygenase nodR (511 aa).

Residues 8-28 form a helical membrane-spanning segment; sequence ILFPISWEQSPIFLAVGLIFA. Asn-76 and Asn-373 each carry an N-linked (GlcNAc...) asparagine glycan. Cys-452 serves as a coordination point for heme.

Belongs to the cytochrome P450 family. Heme serves as cofactor.

It localises to the membrane. Its pathway is secondary metabolite biosynthesis. Functionally, cytochrome P450 monooxygenase; part of the gene cluster that mediates the biosynthesis of the indole diterpenes nodulisporic acids (NA). Nodulisporic acid A (NAA) and its chemically modified derivatives are of particular significance because of their highly potent insecticidal activity against blood-feeding arthropods and lack of observable adverse effects on mammals, in particular the tremogenicity associated with the paspaline-derived IDTs is not observed. The geranylgeranyl diphosphate (GGPP) synthase ggs1, localized outside of the cluster, is proposed to catalyze the first step in nodulisporic acid biosynthesis via conversion of farnesyl pyrophosphate and isopentyl pyrophosphate into geranylgeranyl pyrophosphate (GGPP). Condensation of indole-3-glycerol phosphate with GGPP by the prenyl transferase nodC then forms 3-geranylgeranylindole (3-GGI). Epoxidation by the FAD-dependent monooxygenase nodM leads to a single-epoxidized-GGI that is substrate of the terpene cyclase nodB for cyclization to yield emindole SB. The terminal methyl carbon, C28, of emindole SB is then oxidized by the cytochrome P450 monooxygenase nodW to produce nodulisporic acid F (NAF), the pentacyclic core of NAA. NAF is converted to nodulisporic acid E (NAE) via prenylation. This step is probably performed by one of the indole diterpene prenyltransferases nodD1 or nodD2. Several oxidation steps performed by the FAD-linked oxidoreductase nodO and one of the cytochrome P450 monooxygenase nodR, nodX or nodZ further convert NAE to nodulisporic acid D (NAD). NAD is substrate of cytochrome P450 monooxygenase nodJ to produce the precursor of nodulisporic acid C (NAC), converted to NAC by one of the indole diterpene prenyltransferases nodD1 or nodD2. The FAD-dependent monooxygenase nodY2 then oxidizes NAC to nodulisporic acid B (NAB). Finally NAB is converted to NAA by one of the cytochrome P450 monooxygenases nodR, nodX or nodZ. In Hypoxylon pulicicidum, this protein is Cytochrome P450 monooxygenase nodR.